Here is a 284-residue protein sequence, read N- to C-terminus: Nucleotide-binding protein Sbal195_0713 (284 aa).

8–15 (GRSGSGKS) is an ATP binding site. Residue 56-59 (DVRN) coordinates GTP.

The protein belongs to the RapZ-like family.

Functionally, displays ATPase and GTPase activities. In Shewanella baltica (strain OS195), this protein is Nucleotide-binding protein Sbal195_0713.